A 301-amino-acid polypeptide reads, in one-letter code: Putative glycosyltransferase MJ1113 (301 aa).

The next 8 membrane-spanning stretches (helical) occupy residues 2–22 (GHYF…SAVL), 62–82 (FIPF…IIGI), 95–115 (LILL…NSYV), 117–137 (LIEI…TNML), 140–160 (FNGL…LVLF), 164–184 (YTTG…LLIF), 191–211 (VFPG…LAVV), and 280–300 (VTVL…ISLI).

It belongs to the glycosyltransferase 4 family.

The protein localises to the cell membrane. In Methanocaldococcus jannaschii (strain ATCC 43067 / DSM 2661 / JAL-1 / JCM 10045 / NBRC 100440) (Methanococcus jannaschii), this protein is Putative glycosyltransferase MJ1113.